The primary structure comprises 308 residues: Phosphoribosylaminoimidazole-succinocarboxamide synthase (308 aa).

It belongs to the SAICAR synthetase family.

The enzyme catalyses 5-amino-1-(5-phospho-D-ribosyl)imidazole-4-carboxylate + L-aspartate + ATP = (2S)-2-[5-amino-1-(5-phospho-beta-D-ribosyl)imidazole-4-carboxamido]succinate + ADP + phosphate + 2 H(+). It participates in purine metabolism; IMP biosynthesis via de novo pathway; 5-amino-1-(5-phospho-D-ribosyl)imidazole-4-carboxamide from 5-amino-1-(5-phospho-D-ribosyl)imidazole-4-carboxylate: step 1/2. The protein is Phosphoribosylaminoimidazole-succinocarboxamide synthase of Xanthomonas euvesicatoria pv. vesicatoria (strain 85-10) (Xanthomonas campestris pv. vesicatoria).